We begin with the raw amino-acid sequence, 259 residues long: Thiazole synthase (259 aa).

The active-site Schiff-base intermediate with DXP is the Lys-98. 1-deoxy-D-xylulose 5-phosphate-binding positions include Gly-159, 185 to 186, and 207 to 208; these read AG and NS.

Belongs to the ThiG family. As to quaternary structure, homotetramer. Forms heterodimers with either ThiH or ThiS.

The protein localises to the cytoplasm. The catalysed reaction is [ThiS sulfur-carrier protein]-C-terminal-Gly-aminoethanethioate + 2-iminoacetate + 1-deoxy-D-xylulose 5-phosphate = [ThiS sulfur-carrier protein]-C-terminal Gly-Gly + 2-[(2R,5Z)-2-carboxy-4-methylthiazol-5(2H)-ylidene]ethyl phosphate + 2 H2O + H(+). The protein operates within cofactor biosynthesis; thiamine diphosphate biosynthesis. In terms of biological role, catalyzes the rearrangement of 1-deoxy-D-xylulose 5-phosphate (DXP) to produce the thiazole phosphate moiety of thiamine. Sulfur is provided by the thiocarboxylate moiety of the carrier protein ThiS. In vitro, sulfur can be provided by H(2)S. The protein is Thiazole synthase of Chlorobaculum tepidum (strain ATCC 49652 / DSM 12025 / NBRC 103806 / TLS) (Chlorobium tepidum).